We begin with the raw amino-acid sequence, 433 residues long: Probable imidazolonepropionase (433 aa).

The 4-imidazolone-5-propanoate site is built by Tyr160 and His193. Residue Tyr160 coordinates N-formimidoyl-L-glutamate. His261 lines the Fe(3+) pocket. His261 is a Zn(2+) binding site. Residue Glu264 participates in 4-imidazolone-5-propanoate binding. A Fe(3+)-binding site is contributed by Asp335. Asp335 serves as a coordination point for Zn(2+). Position 337 (Asn337) interacts with N-formimidoyl-L-glutamate.

This sequence belongs to the metallo-dependent hydrolases superfamily. HutI family. Zn(2+) serves as cofactor. Requires Fe(3+) as cofactor.

The enzyme catalyses 4-imidazolone-5-propanoate + H2O = N-formimidoyl-L-glutamate. The protein operates within amino-acid degradation; L-histidine degradation into L-glutamate; N-formimidoyl-L-glutamate from L-histidine: step 3/3. This is Probable imidazolonepropionase (amdhd1) from Danio rerio (Zebrafish).